The sequence spans 179 residues: Large ribosomal subunit protein uL5 (179 aa).

This sequence belongs to the universal ribosomal protein uL5 family. Part of the 50S ribosomal subunit; part of the 5S rRNA/L5/L18/L25 subcomplex. Contacts the 5S rRNA and the P site tRNA. Forms a bridge to the 30S subunit in the 70S ribosome.

Functionally, this is one of the proteins that bind and probably mediate the attachment of the 5S RNA into the large ribosomal subunit, where it forms part of the central protuberance. In the 70S ribosome it contacts protein S13 of the 30S subunit (bridge B1b), connecting the 2 subunits; this bridge is implicated in subunit movement. Contacts the P site tRNA; the 5S rRNA and some of its associated proteins might help stabilize positioning of ribosome-bound tRNAs. The sequence is that of Large ribosomal subunit protein uL5 from Vibrio atlanticus (strain LGP32) (Vibrio splendidus (strain Mel32)).